Consider the following 444-residue polypeptide: Serine--tRNA ligase (444 aa).

249 to 251 lines the L-serine pocket; the sequence is TAE. ATP-binding positions include 280 to 282 and Val296; that span reads RRE. Position 303 (Glu303) interacts with L-serine. Residue 367–370 participates in ATP binding; that stretch reads EIVS. Residue Thr401 participates in L-serine binding.

Belongs to the class-II aminoacyl-tRNA synthetase family. Type-1 seryl-tRNA synthetase subfamily. In terms of assembly, homodimer. The tRNA molecule binds across the dimer.

It localises to the cytoplasm. It catalyses the reaction tRNA(Ser) + L-serine + ATP = L-seryl-tRNA(Ser) + AMP + diphosphate + H(+). It carries out the reaction tRNA(Sec) + L-serine + ATP = L-seryl-tRNA(Sec) + AMP + diphosphate + H(+). It participates in aminoacyl-tRNA biosynthesis; selenocysteinyl-tRNA(Sec) biosynthesis; L-seryl-tRNA(Sec) from L-serine and tRNA(Sec): step 1/1. Functionally, catalyzes the attachment of serine to tRNA(Ser). Is also able to aminoacylate tRNA(Sec) with serine, to form the misacylated tRNA L-seryl-tRNA(Sec), which will be further converted into selenocysteinyl-tRNA(Sec). In Picrophilus torridus (strain ATCC 700027 / DSM 9790 / JCM 10055 / NBRC 100828 / KAW 2/3), this protein is Serine--tRNA ligase.